The sequence spans 170 residues: Keratin-associated protein 9-2 (170 aa).

17 repeat units span residues 8–12 (CCQPT), 13–17 (CCRTT), 18–22 (CCRTT), 37–41 (CCQPT), 42–46 (CCVSS), 51–55 (CCCPT), 61–65 (CCRTT), 66–70 (CCQPT), 75–79 (CYQPS), 80–84 (CCSTP), 85–89 (CCQPT), 90–94 (CCGSS), 95–99 (CCGQT), 140–144 (CCHPA), 145–149 (CCETT), 150–154 (CCRTT), and 164–168 (CCQPS). The segment at 8-168 (CCQPTCCRTT…TCVSSCCQPS (161 aa)) is 17 X 5 AA repeats of C-C-[RQVSGE]-[SPTQ]-[TASP].

This sequence belongs to the KRTAP type 9 family. As to quaternary structure, interacts with hair keratins.

In the hair cortex, hair keratin intermediate filaments are embedded in an interfilamentous matrix, consisting of hair keratin-associated proteins (KRTAP), which are essential for the formation of a rigid and resistant hair shaft through their extensive disulfide bond cross-linking with abundant cysteine residues of hair keratins. The matrix proteins include the high-sulfur and high-glycine-tyrosine keratins. This chain is Keratin-associated protein 9-2 (KRTAP9-2), found in Pan troglodytes (Chimpanzee).